Reading from the N-terminus, the 103-residue chain is Entry-fusion complex protein OPG086 (103 aa).

Residues 1 to 21 form a helical; Signal-anchor membrane-spanning segment; sequence MTLFLVIFFILFLLLCYFFSF. The Virion surface segment spans residues 22–103; that stretch reads KRTNKMEIGI…KLVPTLLLSK (82 aa).

This sequence belongs to the orthopoxvirus OPG086 family. As to quaternary structure, interacts with OPG099/L5. Component of the entry fusion complex (EFC) composed of OPG053, OPG076, OPG086, OPG094, OPG095, OPG099, OPG107, OPG143, OPG104, OPG147 and OPG155. Except for OPG095 and OPG053, each of the EFC proteins is required for assembly or stability of the complex. Post-translationally, unglycosylated because produced in viral factories instead of the classic ER -Golgi route.

The protein localises to the virion membrane. In terms of biological role, component of the entry fusion complex (EFC), which consists of 11 proteins. During cell infection, this complex mediates entry of the virion core into the host cytoplasm by a two-step mechanism consisting of lipid mixing of the viral and cellular membranes and subsequent pore formation. In Vertebrata (FPV), this protein is Entry-fusion complex protein OPG086 (OPG086).